A 202-amino-acid polypeptide reads, in one-letter code: 3-isopropylmalate dehydratase small subunit (202 aa).

Belongs to the LeuD family. LeuD type 1 subfamily. As to quaternary structure, heterodimer of LeuC and LeuD.

It catalyses the reaction (2R,3S)-3-isopropylmalate = (2S)-2-isopropylmalate. It participates in amino-acid biosynthesis; L-leucine biosynthesis; L-leucine from 3-methyl-2-oxobutanoate: step 2/4. Catalyzes the isomerization between 2-isopropylmalate and 3-isopropylmalate, via the formation of 2-isopropylmaleate. The chain is 3-isopropylmalate dehydratase small subunit from Caulobacter vibrioides (strain ATCC 19089 / CIP 103742 / CB 15) (Caulobacter crescentus).